The sequence spans 251 residues: Phosphate import ATP-binding protein PstB (251 aa).

The ABC transporter domain maps to 5 to 246; sequence MNSKDVNFWY…PENKKTEDYI (242 aa). 37–44 is an ATP binding site; that stretch reads GPSGCGKS.

Belongs to the ABC transporter superfamily. Phosphate importer (TC 3.A.1.7) family. The complex is composed of two ATP-binding proteins (PstB), two transmembrane proteins (PstC and PstA) and a solute-binding protein (PstS).

It localises to the cell membrane. The catalysed reaction is phosphate(out) + ATP + H2O = ADP + 2 phosphate(in) + H(+). Its function is as follows. Part of the ABC transporter complex PstSACB involved in phosphate import. Responsible for energy coupling to the transport system. This chain is Phosphate import ATP-binding protein PstB, found in Methanococcus maripaludis (strain DSM 14266 / JCM 13030 / NBRC 101832 / S2 / LL).